The following is a 143-amino-acid chain: Actin-depolymerizing factor (143 aa).

Residues 11 to 143 enclose the ADF-H domain; it reads GMGVADHSKN…DLEVLRERAH (133 aa).

It belongs to the actin-binding proteins ADF family.

In terms of biological role, actin-depolymerizing protein. Severs actin filaments (F-actin) and binds to actin monomers. This Vitis vinifera (Grape) protein is Actin-depolymerizing factor.